The following is a 981-amino-acid chain: Anoctamin-3 (981 aa).

A compositionally biased stretch (polar residues) spans 1 to 22 (MVHHSGSIQSFKQQKGMNISKS). The segment at 1–33 (MVHHSGSIQSFKQQKGMNISKSEITKETSLKPS) is disordered. Residues 1-403 (MVHHSGSIQS…LYFAWLGWYT (403 aa)) lie on the Cytoplasmic side of the membrane. Residues 404-424 (GMLIPAAIVGLCVFFYGLFTM) form a helical membrane-spanning segment. N425, N448, and N455 each carry an N-linked (GlcNAc...) asparagine glycan. The Extracellular portion of the chain corresponds to 425 to 469 (NNSQVSQEICKATEVFMCPLCDKNCSLQRLNDSCIYAKVTYLFDN). Residues 470 to 490 (GGTVFFAIFMAIWATVFLEFW) traverse the membrane as a helical segment. Residues 491–550 (KRRRSILTYTWDLIEWEEEEETLRPQFEAKYYKMEIVNPITGKPEPHQPSSDKVTRLLVS) lie on the Cytoplasmic side of the membrane. A helical transmembrane segment spans residues 551–571 (VSGIFFMISLVITAVFGVVVY). The Extracellular portion of the chain corresponds to 572-592 (RLVVMEQFASFKWNFIKQYWQ). Residues 593 to 613 (FATSAAAVCINFIIIMLLNLA) traverse the membrane as a helical segment. Topologically, residues 614–640 (YEKIAYLLTNLEYPRTESEWENSFALK) are cytoplasmic. The chain crosses the membrane as a helical span at residues 641–661 (MFLFQFVNLNSSIFYIAFFLG). Topologically, residues 662–761 (RFVGHPGKYN…MDEYLEMVLQ (100 aa)) are extracellular. Residues 762-782 (FGFTTIFVAAFPLAPLLALLN) traverse the membrane as a helical segment. At 783-810 (NIIEIRLDAYKFVTQWRRPLPARATDIG) the chain is on the cytoplasmic side. A helical membrane pass occupies residues 811-831 (IWLGILEGIGILAVITNAFVI). Over 832 to 914 (AITSDYIPRF…QYWHILAARL (83 aa)) the chain is Extracellular. N-linked (GlcNAc...) asparagine glycosylation occurs at N866. The chain crosses the membrane as a helical span at residues 915–935 (AFIIVFEHLVFGIKSFIAYLI). Residues 936–981 (PDVPKGLHDRIRREKYLVQEMMYEAELEHLQQQRRKSGQPVHHEWP) lie on the Cytoplasmic side of the membrane.

Belongs to the anoctamin family. As to quaternary structure, interacts with KCNT1/Slack. In terms of tissue distribution, highly expressed in the forebrain striatum.

The protein resides in the cell membrane. The enzyme catalyses a 1,2-diacyl-sn-glycero-3-phosphocholine(in) = a 1,2-diacyl-sn-glycero-3-phosphocholine(out). The catalysed reaction is a beta-D-galactosyl-(1&lt;-&gt;1')-N-acylsphing-4-enine(out) = a beta-D-galactosyl-(1&lt;-&gt;1')-N-acylsphing-4-enine(in). Has calcium-dependent phospholipid scramblase activity; scrambles phosphatidylcholine and galactosylceramide. Seems to act as potassium channel regulator and may inhibit pain signaling; can facilitate KCNT1/Slack channel activity by promoting its full single-channel conductance at very low sodium concentrations and by increasing its sodium sensitivity. Does not exhibit calcium-activated chloride channel (CaCC) activity. The protein is Anoctamin-3 (ANO3) of Homo sapiens (Human).